We begin with the raw amino-acid sequence, 145 residues long: NADH-quinone oxidoreductase subunit A 1 (145 aa).

Transmembrane regions (helical) follow at residues 18 to 38, 71 to 91, and 104 to 124; these read ILPL…LLLA, VPFY…VFIF, and GLIH…WLWL.

This sequence belongs to the complex I subunit 3 family. As to quaternary structure, NDH-1 is composed of 14 different subunits. Subunits NuoA, H, J, K, L, M, N constitute the membrane sector of the complex.

It is found in the cell inner membrane. The catalysed reaction is a quinone + NADH + 5 H(+)(in) = a quinol + NAD(+) + 4 H(+)(out). Its function is as follows. NDH-1 shuttles electrons from NADH, via FMN and iron-sulfur (Fe-S) centers, to quinones in the respiratory chain. The immediate electron acceptor for the enzyme in this species is believed to be ubiquinone. Couples the redox reaction to proton translocation (for every two electrons transferred, four hydrogen ions are translocated across the cytoplasmic membrane), and thus conserves the redox energy in a proton gradient. This is NADH-quinone oxidoreductase subunit A 1 from Geotalea uraniireducens (strain Rf4) (Geobacter uraniireducens).